Here is a 638-residue protein sequence, read N- to C-terminus: 1-deoxy-D-xylulose-5-phosphate synthase (638 aa).

Thiamine diphosphate-binding positions include histidine 71 and 112–114; that span reads SHA. A Mg(2+)-binding site is contributed by aspartate 144. Thiamine diphosphate-binding positions include 145 to 146, asparagine 173, tyrosine 284, and glutamate 365; that span reads GA. Position 173 (asparagine 173) interacts with Mg(2+).

It belongs to the transketolase family. DXPS subfamily. As to quaternary structure, homodimer. Requires Mg(2+) as cofactor. The cofactor is thiamine diphosphate.

It carries out the reaction D-glyceraldehyde 3-phosphate + pyruvate + H(+) = 1-deoxy-D-xylulose 5-phosphate + CO2. It participates in metabolic intermediate biosynthesis; 1-deoxy-D-xylulose 5-phosphate biosynthesis; 1-deoxy-D-xylulose 5-phosphate from D-glyceraldehyde 3-phosphate and pyruvate: step 1/1. In terms of biological role, catalyzes the acyloin condensation reaction between C atoms 2 and 3 of pyruvate and glyceraldehyde 3-phosphate to yield 1-deoxy-D-xylulose-5-phosphate (DXP). The protein is 1-deoxy-D-xylulose-5-phosphate synthase of Mycobacterium bovis (strain ATCC BAA-935 / AF2122/97).